Consider the following 365-residue polypeptide: Aminomethyltransferase (365 aa).

Belongs to the GcvT family. In terms of assembly, the glycine cleavage system is composed of four proteins: P, T, L and H.

The enzyme catalyses N(6)-[(R)-S(8)-aminomethyldihydrolipoyl]-L-lysyl-[protein] + (6S)-5,6,7,8-tetrahydrofolate = N(6)-[(R)-dihydrolipoyl]-L-lysyl-[protein] + (6R)-5,10-methylene-5,6,7,8-tetrahydrofolate + NH4(+). Its function is as follows. The glycine cleavage system catalyzes the degradation of glycine. This is Aminomethyltransferase from Geobacillus thermodenitrificans (strain NG80-2).